The sequence spans 453 residues: Proton extrusion protein PxcA (453 aa).

The tract at residues serine 147–threonine 189 is disordered. The segment covering threonine 154 to threonine 163 has biased composition (polar residues). The span at asparagine 164–serine 175 shows a compositional bias: low complexity. Positions glycine 176 to threonine 189 are enriched in polar residues. Helical transmembrane passes span phenylalanine 235–leucine 255, serine 330–serine 350, leucine 377–isoleucine 397, and phenylalanine 413–isoleucine 433.

The protein belongs to the CemA family.

It localises to the cell inner membrane. Required for H(+) efflux immediately after light irradiation to form a rapid H(+) concentration gradient across the thylakoid membranes. Together with PxcL, contributes to transient H(+) uptake following dark to light transition. The chain is Proton extrusion protein PxcA from Crocosphaera subtropica (strain ATCC 51142 / BH68) (Cyanothece sp. (strain ATCC 51142)).